The chain runs to 64 residues: Large ribosomal subunit protein bL33c (64 aa).

This sequence belongs to the bacterial ribosomal protein bL33 family.

The protein resides in the plastid. The protein localises to the chloroplast. In Mesostigma viride (Green alga), this protein is Large ribosomal subunit protein bL33c (rpl33).